The following is a 436-amino-acid chain: Testican-3 (436 aa).

A signal peptide spans 1–21; it reads MLKVSAVLCVCAAAWCSQSLA. Intrachain disulfides connect C90-C101, C95-C111, C139-C169, C142-C162, C151-C183, C317-C341, C352-C359, and C361-C380. Residues 133-185 enclose the Kazal-like domain; the sequence is GPILSTCKQCPVVYPSPVCGSDGHTYSFQCKLEYQACVLGKQISVKCEGHCPC. The Thyroglobulin type-1 domain occupies 314–380; that stretch reads DPPCQTELSN…GSRINGVADC (67 aa). S387 and S392 each carry an O-linked (Xyl...) (glycosaminoglycan) serine glycan. Residues 393–436 are disordered; sequence GDFHEWTDDEDDEDDIMNDEDEIEDDDEDEGDDDDGGDDHDVYI. Acidic residues predominate over residues 399-430; sequence TDDEDDEDDIMNDEDEIEDDDEDEGDDDDGGD.

Contains chondroitin sulfate and heparan sulfate O-linked oligosaccharides. In terms of tissue distribution, expressed in brain.

It localises to the secreted. Its subcellular location is the extracellular space. It is found in the extracellular matrix. In terms of biological role, may participate in diverse steps of neurogenesis. Inhibits the processing of pro-matrix metalloproteinase 2 (MMP-2) by MT1-MMP and MT3-MMP. May interfere with tumor invasion. This is Testican-3 (SPOCK3) from Homo sapiens (Human).